The following is a 467-amino-acid chain: ATP-dependent protease ATPase subunit HslU (467 aa).

ATP is bound by residues Val-22 and 64 to 69; that span reads GVGKTE. Positions 149-192 are disordered; the sequence is QTNNPLESLFGGAIPNFGQNNEDEEEPPTEEIKTKRSEIKRQLE. Over residues 178–192 the composition is skewed to basic and acidic residues; sequence EEIKTKRSEIKRQLE. ATP-binding residues include Asp-280, Glu-345, and Arg-417.

It belongs to the ClpX chaperone family. HslU subfamily. In terms of assembly, a double ring-shaped homohexamer of HslV is capped on each side by a ring-shaped HslU homohexamer. The assembly of the HslU/HslV complex is dependent on binding of ATP.

It localises to the cytoplasm. ATPase subunit of a proteasome-like degradation complex; this subunit has chaperone activity. The binding of ATP and its subsequent hydrolysis by HslU are essential for unfolding of protein substrates subsequently hydrolyzed by HslV. HslU recognizes the N-terminal part of its protein substrates and unfolds these before they are guided to HslV for hydrolysis. The polypeptide is ATP-dependent protease ATPase subunit HslU (Staphylococcus aureus (strain MRSA252)).